Here is a 250-residue protein sequence, read N- to C-terminus: Probable E3 ubiquitin-protein ligase RHY1A (250 aa).

Positions 1 to 10 (MTSASELFST) are enriched in polar residues. The disordered stretch occupies residues 1 to 106 (MTSASELFST…ETQSSSFVNL (106 aa)). The segment covering 29–47 (YRHHSHHHHRRHGVHHHNQ) has biased composition (basic residues). Basic and acidic residues predominate over residues 48–58 (RHDSDGCDPLR). Over residues 60–69 (PTPRLRRFFH) the composition is skewed to basic residues. The span at 71–80 (PIQERSRPIR) shows a compositional bias: basic and acidic residues. Residues 91 to 102 (TDSTDTETQSSS) are compositionally biased toward low complexity. The RING-type; atypical zinc finger occupies 203 to 244 (CSICLESFTKGDMLISLPCTHSFHSSCLNPWLRACGDCPCCR).

It carries out the reaction S-ubiquitinyl-[E2 ubiquitin-conjugating enzyme]-L-cysteine + [acceptor protein]-L-lysine = [E2 ubiquitin-conjugating enzyme]-L-cysteine + N(6)-ubiquitinyl-[acceptor protein]-L-lysine.. The protein operates within protein modification; protein ubiquitination. Its function is as follows. Probable E3 ubiquitin-protein ligase that may possess E3 ubiquitin ligase activity in vitro. The polypeptide is Probable E3 ubiquitin-protein ligase RHY1A (Arabidopsis thaliana (Mouse-ear cress)).